The sequence spans 377 residues: Naringenin,2-oxoglutarate 3-dioxygenase (377 aa).

Positions Cys193–Pro297 constitute a Fe2OG dioxygenase domain. Positions 220, 222, and 278 each coordinate Fe cation. A 2-oxoglutarate-binding site is contributed by Arg288.

Belongs to the iron/ascorbate-dependent oxidoreductase family. The cofactor is Fe(2+). L-ascorbate is required as a cofactor.

The catalysed reaction is a (2S)-flavan-4-one + 2-oxoglutarate + O2 = a (2R,3R)-dihydroflavonol + succinate + CO2. Its pathway is secondary metabolite biosynthesis; flavonoid biosynthesis. Functionally, catalyzes the 3-beta-hydroxylation of 2S-flavanones to 2R,3R-dihydroflavonols which are intermediates in the biosynthesis of flavonols, anthocyanidins, catechins and proanthocyanidins in plants. This chain is Naringenin,2-oxoglutarate 3-dioxygenase, found in Hordeum vulgare (Barley).